Reading from the N-terminus, the 207-residue chain is 5-nitrosalicylic acid 1,2-dioxygenase (207 aa).

Residues glutamine 85–isoleucine 151 enclose the Cupin type-2 domain.

It catalyses the reaction 5-nitrosalicylate + O2 = 2-oxo-3-(5-oxofuran-2-ylidene)propanoate + nitrite + H(+). Its function is as follows. Dioxygenase that catalyzes the cleavage of the aromatic ring of 5-nitrosalicylate (5NSA) without prior removal of the nitro group in biodegradation of 5-nitroanthranilate. In Bradyrhizobium sp, this protein is 5-nitrosalicylic acid 1,2-dioxygenase (naaB).